Here is a 442-residue protein sequence, read N- to C-terminus: Ribosomal protein uS12 methylthiotransferase RimO (442 aa).

One can recognise an MTTase N-terminal domain in the interval 13–129 (RSIFLLSLGC…ILNILGTAYD (117 aa)). The [4Fe-4S] cluster site is built by Cys22, Cys58, Cys92, Cys153, Cys157, and Cys160. Positions 139–369 (LSPSHYAWLK…MELQEGISEK (231 aa)) constitute a Radical SAM core domain. The 68-residue stretch at 372-439 (RALEEKALKV…AYELVGRIKN (68 aa)) folds into the TRAM domain.

Belongs to the methylthiotransferase family. RimO subfamily. [4Fe-4S] cluster is required as a cofactor.

It localises to the cytoplasm. The enzyme catalyses L-aspartate(89)-[ribosomal protein uS12]-hydrogen + (sulfur carrier)-SH + AH2 + 2 S-adenosyl-L-methionine = 3-methylsulfanyl-L-aspartate(89)-[ribosomal protein uS12]-hydrogen + (sulfur carrier)-H + 5'-deoxyadenosine + L-methionine + A + S-adenosyl-L-homocysteine + 2 H(+). Catalyzes the methylthiolation of an aspartic acid residue of ribosomal protein uS12. This chain is Ribosomal protein uS12 methylthiotransferase RimO, found in Chlorobium phaeobacteroides (strain BS1).